A 202-amino-acid polypeptide reads, in one-letter code: Histone chaperone ASF1B (202 aa).

Residues 1 to 156 are interaction with histone H3 and CHAF1B; that stretch reads MAKVSVLNVA…TRFHINWDNN (156 aa). A Phosphoserine; by TLK2 modification is found at Ser198.

The protein belongs to the ASF1 family. In terms of assembly, interacts with histone H3 (via C-terminus), including histone H3.1, H3.2 and H3.3, and histone H4; the interaction with H3 is direct. Interacts with the CHAF1A, CHAF1B and RBBP4 subunits of the CAF-1 complex. Interacts with HAT1, NASP and TAF1. Found in a soluble complex with NASP and histones H3 and H4; the interaction with NASP is probably indirect and mediated by H3-H4. Interacts with CDAN1. Found in a cytosolic complex with CDAN1, ASF1A, IPO4 and histones H3.1 and H4. Interacts with CREBBP. Phosphorylated by TLK1 and TLK2.

It localises to the nucleus. Its subcellular location is the cytoplasm. The protein resides in the cytosol. Its function is as follows. Histone chaperone that facilitates histone deposition and histone exchange and removal during nucleosome assembly and disassembly. Cooperates with chromatin assembly factor 1 (CAF-1) to promote replication-dependent chromatin assembly. Also involved in the nuclear import of the histone H3-H4 dimer together with importin-4 (IPO4): specifically recognizes and binds newly synthesized histones with the monomethylation of H3 'Lys-9' (H3K9me1) and diacetylation at 'Lys-5' and 'Lys-12' of H4 (H4K5ac and H4K12ac) marks in the cytosol. Does not participate in replication-independent nucleosome deposition which is mediated by ASF1A and HIRA. Required for gonad development. The sequence is that of Histone chaperone ASF1B (ASF1B) from Bos taurus (Bovine).